The primary structure comprises 350 residues: tRNA pseudouridine synthase D (350 aa).

The active-site Nucleophile is the D79. In terms of domain architecture, TRUD spans 154–306 (GAPNYYGPQR…EQERRPIVLY (153 aa)).

This sequence belongs to the pseudouridine synthase TruD family.

The catalysed reaction is uridine(13) in tRNA = pseudouridine(13) in tRNA. Functionally, responsible for synthesis of pseudouridine from uracil-13 in transfer RNAs. This chain is tRNA pseudouridine synthase D, found in Pseudoalteromonas atlantica (strain T6c / ATCC BAA-1087).